The chain runs to 508 residues: ATP synthase subunit alpha, chloroplastic (508 aa).

170-177 (GDRQTGKT) is a binding site for ATP.

It belongs to the ATPase alpha/beta chains family. As to quaternary structure, F-type ATPases have 2 components, CF(1) - the catalytic core - and CF(0) - the membrane proton channel. CF(1) has five subunits: alpha(3), beta(3), gamma(1), delta(1), epsilon(1). CF(0) has four main subunits: a, b, b' and c.

It localises to the plastid. It is found in the chloroplast thylakoid membrane. It catalyses the reaction ATP + H2O + 4 H(+)(in) = ADP + phosphate + 5 H(+)(out). Produces ATP from ADP in the presence of a proton gradient across the membrane. The alpha chain is a regulatory subunit. In Lactuca sativa (Garden lettuce), this protein is ATP synthase subunit alpha, chloroplastic.